A 162-amino-acid chain; its full sequence is uncharacterized protein (162 aa).

This sequence belongs to the baculoviridae 19 kDa protein family.

This is an uncharacterized protein from Tortricidae (ClGV).